The sequence spans 227 residues: N-acetyltransferase 8B (227 aa).

Topologically, residues 1-42 (MAPYHIRKYQESDRKSVVGLLSGGMAEHAPATFRRLLKLPRT) are cytoplasmic. The chain crosses the membrane as a helical; Signal-anchor for type II membrane protein span at residues 43 to 63 (LILLLGGALALLLVSGSWILA). One can recognise an N-acetyltransferase domain in the interval 61 to 214 (ILALVFSLSL…ARLVDLHTVH (154 aa)). Residues 64–227 (LVFSLSLLPA…HLPSAQAGRL (164 aa)) are Lumenal-facing. The residue at position 99 (lysine 99) is an N6-acetyllysine.

This sequence belongs to the NAT8 family. Acetylation on Lys-99 modulates enzymatic activity.

It localises to the endoplasmic reticulum-Golgi intermediate compartment membrane. The protein resides in the endoplasmic reticulum membrane. It catalyses the reaction L-lysyl-[protein] + acetyl-CoA = N(6)-acetyl-L-lysyl-[protein] + CoA + H(+). With respect to regulation, allosterically regulated by acetylation at residue Lys-99. Functionally, endoplasmic reticulum (ER)-membrane-bound lysine N-acetyltransferase catalyzing the N6-acetylation of lysine residues in the lumen of the ER in various proteins, including PROM1 and BACE1, using acetyl-CoA as acetyl donor. Thereby, may regulate apoptosis through the acetylation and the regulation of the expression of PROM1. Acetylates and stabilizes BACE1 immature protein, leading to increased steady-state levels in neurons. By acting on BACE1 expression, may regulate amyloid beta-peptide formation. N(6)-lysine acetylation in ER maintains protein homeostasis and regulates reticulophagy. The sequence is that of N-acetyltransferase 8B from Homo sapiens (Human).